Consider the following 99-residue polypeptide: NADH-quinone oxidoreductase subunit K (99 aa).

The next 3 helical transmembrane spans lie at 3–23 (PDNY…GVLL), 28–48 (IVMF…FVTF), and 59–79 (VVAF…LAII).

Belongs to the complex I subunit 4L family. In terms of assembly, NDH-1 is composed of 14 different subunits. Subunits NuoA, H, J, K, L, M, N constitute the membrane sector of the complex.

The protein resides in the cell membrane. The catalysed reaction is a quinone + NADH + 5 H(+)(in) = a quinol + NAD(+) + 4 H(+)(out). NDH-1 shuttles electrons from NADH, via FMN and iron-sulfur (Fe-S) centers, to quinones in the respiratory chain. The immediate electron acceptor for the enzyme in this species is believed to be a menaquinone. Couples the redox reaction to proton translocation (for every two electrons transferred, four hydrogen ions are translocated across the cytoplasmic membrane), and thus conserves the redox energy in a proton gradient. This is NADH-quinone oxidoreductase subunit K from Mycolicibacterium gilvum (strain PYR-GCK) (Mycobacterium gilvum (strain PYR-GCK)).